Reading from the N-terminus, the 371-residue chain is tRNA-specific 2-thiouridylase MnmA (371 aa).

Residues 13–20 and Met-39 each bind ATP; that span reads GMSGGVDS. The interval 99–101 is interaction with target base in tRNA; that stretch reads NPD. Cys-104 (nucleophile) is an active-site residue. Residues Cys-104 and Cys-200 are joined by a disulfide bond. Gly-128 is an ATP binding site. Residues 150-152 are interaction with tRNA; sequence KDQ. Cys-200 serves as the catalytic Cysteine persulfide intermediate. The interval 309–310 is interaction with tRNA; that stretch reads RY.

This sequence belongs to the MnmA/TRMU family.

The protein resides in the cytoplasm. It catalyses the reaction S-sulfanyl-L-cysteinyl-[protein] + uridine(34) in tRNA + AH2 + ATP = 2-thiouridine(34) in tRNA + L-cysteinyl-[protein] + A + AMP + diphosphate + H(+). Functionally, catalyzes the 2-thiolation of uridine at the wobble position (U34) of tRNA, leading to the formation of s(2)U34. The sequence is that of tRNA-specific 2-thiouridylase MnmA from Bacillus velezensis (strain DSM 23117 / BGSC 10A6 / LMG 26770 / FZB42) (Bacillus amyloliquefaciens subsp. plantarum).